The primary structure comprises 1340 residues: Thioester-containing protein 1 allele S1 (1340 aa).

An N-terminal signal peptide occupies residues 1-21; it reads MWQFIRSRILTVIIFIGAAHG. N-linked (GlcNAc...) asparagine glycans are attached at residues asparagine 68, asparagine 199, asparagine 242, asparagine 312, and asparagine 481. Residues 580–609 form a may contain the cleavage site region; the sequence is ENEFDIFHSLGLFARTLDDILFDSANEKTG. Residues asparagine 637, asparagine 728, asparagine 813, and asparagine 828 are each glycosylated (N-linked (GlcNAc...) asparagine). The segment at residues 859-862 is a cross-link (isoglutamyl cysteine thioester (Cys-Gln)); it reads CGEQ. 3 cysteine pairs are disulfide-bonded: cysteine 1217-cysteine 1283, cysteine 1326-cysteine 1338, and cysteine 1329-cysteine 1334.

In terms of assembly, heterodimer of a TEP1-N chain and an TEP1-C chain non-covalently linked. Forms a complex composed of TEP1-N and TEP1-C heterodimer, LRIM1 and APL1C; the interaction stabilizes TEP1-N and TEP1-C heterodimer, prevents its binding to tissues while circulating in the hemolymph and protects the thioester bond from hydrolysis. Mature TEP1 and to a lesser extent full-length TEP1 interact with SPCLIP1; the interaction is induced by microbial infection. In terms of processing, in the hemolymph, the full-length protein is cleaved by an unknow protease into a 75kDa N-terminal (TEP1-N) chain and an 80kDa C-terminal (TEP1-C) chain which remain non-covalently linked. The TEP1-C chain contains the thioester bond which covalently binds to the pathogen surface. Cleavage is induced by bacterial infection or aseptic wound injury. During embryonic and pupal development, the cleaved form is the predominant form. Post-translationally, N-glycosylated. In terms of tissue distribution, specifically expressed in hemocytes (at protein level).

It localises to the secreted. In terms of biological role, plays an essential role in the innate immune response to bacteria and protozoa infection. After proteolytic cleavage, the protein C-terminus binds covalently through a thioester bond to the pathogen surface resulting in pathogen clearance either by melanization or lysis. Initiate the recruitment and activation of a cascade of proteases, mostly of CLIP-domain serine proteases, which leads to the proteolytic cleavage of the prophenoloxidase (PPO) into active phenoloxidase (PO), the rate-limiting enzyme in melanin biosynthesis. In response to parasite P.berghei-mediated infection, binds to and mediates killing of ookinetes, as they egress from midgut epithelial cells into the basal labyrinth, by both lysis and melanization. During bacterial infection, binds to both Gram-positive and Gram-negative bacteria but only promotes phagocytosis of Gram-negative bacteria. Promotes the accumulation of SPCLIP1 onto the surface of P.berghei ookinetes and bacterium E.coli which leads to the melanization of the pathogen. Recruits CLIPA2 to bacteria surface. In response to bacterial infection, required for periostial hemocyte aggregation, but not for the aggregation of sessile hemocytes in non-periostial regions. During the late stage of fungus B.bassiana-mediated infection, required for the initiation of hyphae melanization by binding to the surface of hyphae and recruiting prophenoloxidase PPO to them. Plays a role in male fertility by binding to defective sperm cells and promoting their removal during spermatogenesis. Binds covalently through a thioester bond to the pathogen surface resulting in pathogen clearance. This Anopheles gambiae (African malaria mosquito) protein is Thioester-containing protein 1 allele S1.